The chain runs to 397 residues: MSPPLDSALEPLSEYKETAFPRTEKDPSQYKEHDLVTPEKEIQTGYFSPRGSHSSHGSHDSSASSNISLDDARMSDVNNSPNVFHDDPDTIDEKLSMYWKAANETVIREPYDYIAGIPGKEIRRKLLEAFNHWYKVDEQSCQAIATTVGMAHNASLLIDDIQDSSKLRRGVPCAHEVFGIAQTINSANYVYFLAQNQLFRLRSWPQAISVFNEEMVNLHRGQGMELFWRDNLLPPSMDDYLQMIANKTGGLFRMIVRLLQTSSRQVIDVEQLVDVLGLYFQILDDYKNIREEKMAAQKGFFEDLTEGKFSFPICHAIGEGAKNRTALLHMLRLKTDDMKIKQEAVCILDNAGSLDYTREVLYGLDRKARSLLREFKTPNPFMEALLDAMLSSLQACH.

Residues 1–67 form a disordered region; sequence MSPPLDSALE…SHDSSASSNI (67 aa). Positions 13 to 42 are enriched in basic and acidic residues; the sequence is SEYKETAFPRTEKDPSQYKEHDLVTPEKEI. Residues 52–67 are compositionally biased toward low complexity; the sequence is SHSSHGSHDSSASSNI. Positions 120, 123, and 152 each coordinate isopentenyl diphosphate. Residues Asp-159 and Asp-163 each contribute to the Mg(2+) site. Residue Arg-168 participates in dimethylallyl diphosphate binding. Residue Arg-169 participates in isopentenyl diphosphate binding. Dimethylallyl diphosphate is bound by residues Lys-247, Thr-248, and Gln-281. Residue Asp-284 participates in Mg(2+) binding. Dimethylallyl diphosphate is bound by residues Asn-288, Lys-298, and Lys-308.

Belongs to the FPP/GGPP synthase family. Mg(2+) is required as a cofactor.

The enzyme catalyses isopentenyl diphosphate + dimethylallyl diphosphate = (2E)-geranyl diphosphate + diphosphate. The catalysed reaction is isopentenyl diphosphate + (2E)-geranyl diphosphate = (2E,6E)-farnesyl diphosphate + diphosphate. It carries out the reaction isopentenyl diphosphate + (2E,6E)-farnesyl diphosphate = (2E,6E,10E)-geranylgeranyl diphosphate + diphosphate. It functions in the pathway secondary metabolite biosynthesis; terpenoid biosynthesis. Its function is as follows. Geranylgeranyl pyrophosphate synthase; part of the gene cluster that mediates the biosynthesis of the diterpene ent-pimara-8(14),15-diene (PD). Within the cluster, the HMG-CoA reductase AN1593 functions in the mevalonate pathway, which produces isoprenoid precursors. The geranylgeranyl pyrophosphate (GGPP) synthase AN1592 is needed in the formation of GGPP, the precursor for diterpenes. Lastly, the pimaradiene synthase pbcA performs the 2 cyclization steps that convert GGPP to ent-pimara-8(14),15-diene. The putative roles of the remaining cluster enzymes in ent-pimara-8(14),15-diene biosynthesis is unclear. The cytochrome P450 monooxygenase AN1598, the glutathione S-transferase AN1595, the oxidoreductases AN1596 and AN1597 probably function as decorative enzymes. It is possible that in biological conditions the compound is oxidized to ent-pimara-8(14),15-dien-19-oic acid, which is a bioactive diterpene compound predominant in many plant extracts. This Emericella nidulans (strain FGSC A4 / ATCC 38163 / CBS 112.46 / NRRL 194 / M139) (Aspergillus nidulans) protein is Geranylgeranyl pyrophosphate synthase AN1592.